A 270-amino-acid polypeptide reads, in one-letter code: uncharacterized protein (270 aa).

Positions 1–23 are cleaved as a signal peptide; that stretch reads MKKLLIILAATLVLVLGSSGNFR.

This is an uncharacterized protein from Archaeoglobus fulgidus (strain ATCC 49558 / DSM 4304 / JCM 9628 / NBRC 100126 / VC-16).